A 179-amino-acid polypeptide reads, in one-letter code: Large ribosomal subunit protein uL5 (179 aa).

The protein belongs to the universal ribosomal protein uL5 family. As to quaternary structure, part of the 50S ribosomal subunit; part of the 5S rRNA/L5/L18/L25 subcomplex. Contacts the 5S rRNA and the P site tRNA. Forms a bridge to the 30S subunit in the 70S ribosome.

This is one of the proteins that bind and probably mediate the attachment of the 5S RNA into the large ribosomal subunit, where it forms part of the central protuberance. In the 70S ribosome it contacts protein S13 of the 30S subunit (bridge B1b), connecting the 2 subunits; this bridge is implicated in subunit movement. Contacts the P site tRNA; the 5S rRNA and some of its associated proteins might help stabilize positioning of ribosome-bound tRNAs. This is Large ribosomal subunit protein uL5 from Klebsiella pneumoniae (strain 342).